An 840-amino-acid chain; its full sequence is Probable alpha-glucuronidase A (840 aa).

Residues 1–19 (MWSGIPVFALLSSIGIAAA) form the signal peptide. N-linked (GlcNAc...) asparagine glycosylation is found at Asn50, Asn149, Asn222, Asn262, Asn279, Asn310, Asn465, Asn527, Asn576, Asn610, Asn682, Asn723, and Asn732.

It belongs to the glycosyl hydrolase 67 family.

The protein resides in the secreted. The enzyme catalyses an alpha-D-glucuronoside + H2O = D-glucuronate + an alcohol. In terms of biological role, alpha-glucuronidase involved in the hydrolysis of xylan, a major structural heterogeneous polysaccharide found in plant biomass representing the second most abundant polysaccharide in the biosphere, after cellulose. Releases 4-O-methylglucuronic acid from xylan. This is Probable alpha-glucuronidase A (aguA) from Neosartorya fischeri (strain ATCC 1020 / DSM 3700 / CBS 544.65 / FGSC A1164 / JCM 1740 / NRRL 181 / WB 181) (Aspergillus fischerianus).